The chain runs to 494 residues: UDP-N-acetylmuramoyl-L-alanyl-D-glutamate--L-lysine ligase (494 aa).

Position 30 (S30) interacts with UDP-N-acetyl-alpha-D-muramoyl-L-alanyl-D-glutamate. 110–116 serves as a coordination point for ATP; that stretch reads GTNGKTS. UDP-N-acetyl-alpha-D-muramoyl-L-alanyl-D-glutamate contacts are provided by residues 152-153, S179, and R187; that span reads TT. An N6-carboxylysine modification is found at K219. The short motif at 406-409 is the L-lysine recognition motif element; that stretch reads DNPA.

It belongs to the MurCDEF family. MurE subfamily. Carboxylation is probably crucial for Mg(2+) binding and, consequently, for the gamma-phosphate positioning of ATP.

The protein resides in the cytoplasm. The catalysed reaction is UDP-N-acetyl-alpha-D-muramoyl-L-alanyl-D-glutamate + L-lysine + ATP = UDP-N-acetyl-alpha-D-muramoyl-L-alanyl-gamma-D-glutamyl-L-lysine + ADP + phosphate + H(+). It participates in cell wall biogenesis; peptidoglycan biosynthesis. Catalyzes the addition of L-lysine to the nucleotide precursor UDP-N-acetylmuramoyl-L-alanyl-D-glutamate (UMAG) in the biosynthesis of bacterial cell-wall peptidoglycan. This chain is UDP-N-acetylmuramoyl-L-alanyl-D-glutamate--L-lysine ligase, found in Staphylococcus haemolyticus (strain JCSC1435).